We begin with the raw amino-acid sequence, 452 residues long: Tylactone mycaminosyltransferase (452 aa).

Positions 1 to 16 (MRRALDDRRRGPHGPE) are enriched in basic and acidic residues. A disordered region spans residues 1–20 (MRRALDDRRRGPHGPEGKPP).

This sequence belongs to the glycosyltransferase 28 family.

It catalyses the reaction tylactone + dTDP-alpha-D-mycaminose = 5-O-beta-D-mycaminosyltylactone + dTDP + H(+). The protein operates within antibiotic biosynthesis; tylosin biosynthesis. The activity of TylM2 is substantially increased by the addition of the accessory protein TylM3. Functionally, involved in the biosynthesis of the macrolide antibiotic tylosin derived from the polyketide lactone tylactone. Catalyzes the transfer of alpha-D-mycaminosyl from dTDP-alpha-D-mycaminose to the 5-hydroxyl group of tylactone to yield 5-O-mycaminosytylactone. It can also accept 16-membered tylactone and 12-membered ring macrolide. The polypeptide is Tylactone mycaminosyltransferase (Streptomyces fradiae (Streptomyces roseoflavus)).